A 482-amino-acid polypeptide reads, in one-letter code: MAQTQGTKRKVCYYYDGDVGNYYYGQGHPMKPHRIRMTHNLLLNYGLYRKMEIYRPHKANAEEMTKYHSDDYIKFLRSIRPDNMSEYSKQMQRFNVGEDCPVFDGLFEFCQLSTGGSVASAVKLNKQQTDIAVNWAGGLHHAKKSEASGFCYVNDIVLAILELLKYHQRVLYIDIDIHHGDGVEEAFYTTDRVMTVSFHKYGEYFPGTGDLRDIGAGKGKYYAVNYPLRDGIDDESYEAIFKPVMSKVMEMFQPSAVVLQCGSDSLSGDRLGCFNLTIKGHAKCVEFVKSFNLPMLMLGGGGYTIRNVARCWTYETAVALDTEIPNELPYNDYFEYFGPDFKLHISPSNMTNQNTNEYLEKIKQRLFENLRMLPHAPGVQMQAIPEDAIPEESGDEDEEDPDKRISICSSDKRIACEEEFSDSDEEGEGGRKNSSNFKKAKRVKTEDEKEKDPEEKKEVTEEEKTKEEKPEAKGVKEEVKMA.

The interval 9-321 is histone deacetylase; sequence RKVCYYYDGD…WTYETAVALD (313 aa). Residues glycine 27 and lysine 31 each contribute to the 1D-myo-inositol 1,4,5,6-tetrakisphosphate site. Position 74 is an N6-acetyllysine; alternate (lysine 74). A Glycyl lysine isopeptide (Lys-Gly) (interchain with G-Cter in SUMO2); alternate cross-link involves residue lysine 74. Residue histidine 141 is part of the active site. The Zn(2+) site is built by aspartate 176 and histidine 178. Lysine 220 is subject to N6-acetyllysine. Cysteine 261 is subject to S-nitrosocysteine. Zn(2+) is bound at residue aspartate 264. Arginine 270 serves as a coordination point for 1D-myo-inositol 1,4,5,6-tetrakisphosphate. An S-nitrosocysteine modification is found at cysteine 273. Positions 390-400 are enriched in acidic residues; it reads PEESGDEDEED. A disordered region spans residues 390–482; sequence PEESGDEDEE…KGVKEEVKMA (93 aa). Phosphoserine occurs at positions 393, 406, 409, 421, and 423. Residues 401–416 show a composition bias toward basic and acidic residues; the sequence is PDKRISICSSDKRIAC. The span at 417–427 shows a compositional bias: acidic residues; that stretch reads EEEFSDSDEEG. Lysine 432 bears the N6-methylated lysine; by EHMT2 mark. A Glycyl lysine isopeptide (Lys-Gly) (interchain with G-Cter in SUMO2) cross-link involves residue lysine 438. The segment covering 443–482 has biased composition (basic and acidic residues); that stretch reads VKTEDEKEKDPEEKKEVTEEEKTKEEKPEAKGVKEEVKMA. Lysine 444 is covalently cross-linked (Glycyl lysine isopeptide (Lys-Gly) (interchain with G-Cter in SUMO2); alternate). Lysine 444 is covalently cross-linked (Glycyl lysine isopeptide (Lys-Gly) (interchain with G-Cter in SUMO); alternate). Residues lysine 456, lysine 457, and lysine 473 each participate in a glycyl lysine isopeptide (Lys-Gly) (interchain with G-Cter in SUMO2) cross-link. A Glycyl lysine isopeptide (Lys-Gly) (interchain with G-Cter in SUMO2); alternate cross-link involves residue lysine 476. Residue lysine 476 forms a Glycyl lysine isopeptide (Lys-Gly) (interchain with G-Cter in SUMO); alternate linkage. Lysine 480 participates in a covalent cross-link: Glycyl lysine isopeptide (Lys-Gly) (interchain with G-Cter in SUMO2).

Belongs to the histone deacetylase family. HD type 1 subfamily. In terms of assembly, part of the core histone deacetylase (HDAC) complex composed of HDAC1, HDAC2, RBBP4 and RBBP7, the core complex associates with SIN3, SAP18 and SAP30 to form the SIN3 HDAC complex. Component of the nucleosome remodeling and deacetylase (NuRD) repressor complex, composed of core proteins MTA1, MTA2, MTA3, RBBP4, RBBP7, HDAC1, HDAC2, MBD2, MBD3, and peripherally associated proteins CDK2AP1, CDK2AP2, GATAD2A, GATAD2B, CHD3, CHD4 and CHD5. The exact stoichiometry of the NuRD complex is unknown, and some subunits such as MBD2 and MBD3, GATAD2A and GATAD2B, and CHD3, CHD4 and CHD5 define mutually exclusive NuRD complexes. Component of a BHC histone deacetylase complex that contains HDAC1, HDAC2, HMG20B/BRAF35, KDM1A, RCOR1/CoREST and PHF21A/BHC80. The BHC complex may also contain ZMYM2, ZNF217, ZMYM3, GSE1 and GTF2I. Component of a mSin3A corepressor complex that contains SIN3A, SAP130, SUDS3/SAP45, ARID4B/SAP180, HDAC1 and HDAC2. Found in a trimeric complex with APBB1 and TSHZ3; the interaction between HDAC1 and APBB1 is mediated by TSHZ3. Forms a complex comprising APPL1, RUVBL2, APPL2, CTNNB1 and HDAC2. Component of a RCOR/GFI/KDM1A/HDAC complex. Part of a complex composed of TRIM28, HDAC1, HDAC2 and EHMT2. Part of a complex containing at least CDYL, MIER1, MIER2, HDAC1 and HDAC2. The large PER complex involved in the histone deacetylation is composed of at least HDAC1, PER2, SFPQ and SIN3A. Associates with the 9-1-1 complex; interacts with HUS1. Found in a complex with DNMT3A and HDAC7. Found in a complex with YY1, SIN3A and GON4L. Identified in a histone deacetylase complex that contains DNTTIP1, HDAC1 and MIDEAS; this complex assembles into a tetramer that contains four copies of each protein chain. Found in a complex composed of at least SINHCAF, SIN3A, HDAC1, SAP30, RBBP4, OGT and TET1. Component of the SIN3B complex, which includes SIN3B, HDAC1, PHF12 and MORF4L1. Interacts with GFI1; the interaction is direct. Interacts directly with GFI1B. Interacts with TSHZ3 (via N-terminus); the interaction is direct. Interacts with APEX1; the interaction is not dependent on the acetylated status of APEX1. Interacts with BANP. Interacts with BAZ2A/TIP5. Interacts with BCL6. Interacts with BCOR. Interacts with BHLHE40/DEC1. Interacts with BRCC3; this interaction is enhanced in the presence of PWWP2B. Interacts with BRMS1. Interacts with BRMS1L. Interacts with C10orf90/FATS (via its N-terminal); the interaction prevents binding of HDAC1 to CDKN1A/p21 and facilitates the acetylation and stabilization of CDKN1A/p21. Interacts with CBFA2T3. Interacts with CCAR2. Interacts with CDK2AP1. Interacts with CHD3. Interacts with CHD4. Interacts with CHFR. Interacts with CIART. Interacts with CDKN1A/p21. Interacts with CDK5 complexed to CDK5R1 (p25). Interacts with CRY1. Interacts with DAXX. Interacts with DDIT3/CHOP. Interacts with DDX5. Interacts with DHX36; this interaction occurs in a RNA-dependent manner. Interacts with DNMT1. Interacts with DNTTIP1. Interacts with E4F1. Interacts with EP300. Interacts with ERCC6. Interacts with GATAD2A. Interacts with HCFC1. Interacts with HDAC9. Interacts with HUS1. Interacts with INSM1. Interacts with KDM4A. Interacts with KDM5A; this interaction impairs histone deacetylation. Interacts with KDM5B. Interacts with KLF1. Interacts with MBD3L2. Interacts with MIER1. Interacts with NFE4. Interacts with NR4A2/NURR1. Interacts with NR1D2 (via C-terminus). Interacts with NRIP1. Interacts with NSD2. Interacts with PACS2. Interacts with PHB2. Interacts with PPHLN1. Interacts with PRDM6. Interacts with PRDM16. Interacts with PWWP2A in a MTA1-dependent manner. Interacts with PWWP2B. Interacts with RB1. Interacts with RERE. Interacts with SANBR (via the BTB domain). Interacts with SAMSN1. Interacts with SAP30L. Interacts with SETDB1. Interacts with SIN3A. Interacts with SMAD3. Interacts with SMAD4; positively regulated by ZBTB7A. Interacts with SMARCAD1. Interacts with SMARCA4/BRG1. Interacts with SMYD2. Interacts with SMYD4 (via MYND-type zinc finger). Interacts with SP1; the interaction deacetylates SP1 and regulates its transcriptional activity. Interacts with SP3; the interaction deacetylates SP3 and regulates its transcriptional activity. In vitro, C(18) ceramides increase this interaction and the subsequent SP3 deacetylation and SP3-mediated repression of the TERT promoter. Interacts with SPEN/MINT. Interacts with SPHK2. Interacts with SUV39H1. Interacts with TGIF. Interacts with TGIF2. Interacts with TRAF6. Interacts with TRIM28; the interaction recruits HDAC1 to E2F1 and inhibits its acetylation. Interacts with TSC22D3 isoform 1; this interaction affects HDAC1 activity on MYOG promoter and thus inhibits MYOD1 transcriptional activity. Interacts with UHRF1. Interacts with UHRF2. Interacts with ZBTB7A. Interacts with ZMYND8. Interacts with ZMYND15. Interacts with ZNF431. Interacts with ZNF516; this interaction is enhanced in the presence of PWWP2B. Interacts with ZNF541. Interacts with ZNF638. Interacts with ZNHIT1. Interacts with the non-histone region of MACROH2A1. Identified in a complex with HDAC2, KCTD19, DNTTIP1 and ZNF541. Interacts with MSX3. Interacts with VRK1. Requires Zn(2+) as cofactor. Sumoylated on Lys-444 and Lys-476; which promotes enzymatic activity. Desumoylated by SENP1. Post-translationally, phosphorylation on Ser-421 and Ser-423 promotes enzymatic activity and interactions with NuRD and SIN3 complexes. Phosphorylated by CDK5. In terms of processing, ubiquitinated by CHFR and KCTD11, leading to its degradation by the proteasome.

The protein localises to the nucleus. The catalysed reaction is N(6)-acetyl-L-lysyl-[histone] + H2O = L-lysyl-[histone] + acetate. The enzyme catalyses N(6)-acetyl-L-lysyl-[protein] + H2O = L-lysyl-[protein] + acetate. It carries out the reaction N(6)-(2E)-butenoyl-L-lysyl-[protein] + H2O = (2E)-2-butenoate + L-lysyl-[protein]. It catalyses the reaction N(6)-[(S)-lactoyl]-L-lysyl-[protein] + H2O = (S)-lactate + L-lysyl-[protein]. Its activity is regulated as follows. Inositol tetraphosphate (1D-myo-inositol 1,4,5,6-tetrakisphosphate) may act as an intermolecular glue between HDAC1 and N-Cor repressor complex components. In terms of biological role, histone deacetylase that catalyzes the deacetylation of lysine residues on the N-terminal part of the core histones (H2A, H2B, H3 and H4). Histone deacetylation gives a tag for epigenetic repression and plays an important role in transcriptional regulation, cell cycle progression and developmental events. Histone deacetylases act via the formation of large multiprotein complexes. Acts as a component of the histone deacetylase NuRD complex which participates in the remodeling of chromatin. As part of the SIN3B complex is recruited downstream of the constitutively active genes transcriptional start sites through interaction with histones and mitigates histone acetylation and RNA polymerase II progression within transcribed regions contributing to the regulation of transcription. Also functions as a deacetylase for non-histone targets, such as NR1D2, RELA, SP1, SP3, STAT3 and TSHZ3. Deacetylates SP proteins, SP1 and SP3, and regulates their function. Component of the BRG1-RB1-HDAC1 complex, which negatively regulates the CREST-mediated transcription in resting neurons. Upon calcium stimulation, HDAC1 is released from the complex and CREBBP is recruited, which facilitates transcriptional activation. Deacetylates TSHZ3 and regulates its transcriptional repressor activity. Deacetylates 'Lys-310' in RELA and thereby inhibits the transcriptional activity of NF-kappa-B. Deacetylates NR1D2 and abrogates the effect of KAT5-mediated relieving of NR1D2 transcription repression activity. Component of a RCOR/GFI/KDM1A/HDAC complex that suppresses, via histone deacetylase (HDAC) recruitment, a number of genes implicated in multilineage blood cell development. Involved in CIART-mediated transcriptional repression of the circadian transcriptional activator: CLOCK-BMAL1 heterodimer. Required for the transcriptional repression of circadian target genes, such as PER1, mediated by the large PER complex or CRY1 through histone deacetylation. In addition to protein deacetylase activity, also has protein-lysine deacylase activity: acts as a protein decrotonylase and delactylase by mediating decrotonylation ((2E)-butenoyl) and delactylation (lactoyl) of histones, respectively. This Rattus norvegicus (Rat) protein is Histone deacetylase 1 (Hdac1).